Here is a 25-residue protein sequence, read N- to C-terminus: Putative cytochrome c4 (25 aa).

The interval 1–25 (QEDIEAGKQKSATCTACHGQEGNST) is disordered. 2 residues coordinate heme: cysteine 14 and cysteine 17.

Post-translationally, binds 2 heme groups per subunit.

It localises to the periplasm. In terms of biological role, diheme, high potential cytochrome c believed to be an intermediate electron donor to terminal oxidation systems. This is Putative cytochrome c4 from Aliivibrio fischeri (Vibrio fischeri).